Here is a 553-residue protein sequence, read N- to C-terminus: Probable cytochrome P450 301a1, mitochondrial (553 aa).

Residue Cys-502 participates in heme binding.

This sequence belongs to the cytochrome P450 family. Heme serves as cofactor.

The protein resides in the mitochondrion membrane. The sequence is that of Probable cytochrome P450 301a1, mitochondrial (Cyp301a1) from Drosophila melanogaster (Fruit fly).